The following is a 245-amino-acid chain: tRNA pseudouridine synthase A (245 aa).

The active-site Nucleophile is the aspartate 52. Residue tyrosine 111 participates in substrate binding.

It belongs to the tRNA pseudouridine synthase TruA family. In terms of assembly, homodimer.

The enzyme catalyses uridine(38/39/40) in tRNA = pseudouridine(38/39/40) in tRNA. Formation of pseudouridine at positions 38, 39 and 40 in the anticodon stem and loop of transfer RNAs. In Xanthobacter autotrophicus (strain ATCC BAA-1158 / Py2), this protein is tRNA pseudouridine synthase A.